The sequence spans 637 residues: Chaperone protein HtpG (637 aa).

An a; substrate-binding region spans residues M1–R345. A b region spans residues E346–K562. Residues L563–K637 are c.

The protein belongs to the heat shock protein 90 family. Homodimer.

Its subcellular location is the cytoplasm. In terms of biological role, molecular chaperone. Has ATPase activity. This chain is Chaperone protein HtpG, found in Shewanella frigidimarina (strain NCIMB 400).